Here is a 467-residue protein sequence, read N- to C-terminus: 3-isopropylmalate dehydratase large subunit (467 aa).

3 residues coordinate [4Fe-4S] cluster: cysteine 348, cysteine 408, and cysteine 411. A disordered region spans residues 417–445; the sequence is DQLTPGERSASTSNRNFEGRQGKGGRTHL.

It belongs to the aconitase/IPM isomerase family. LeuC type 1 subfamily. In terms of assembly, heterodimer of LeuC and LeuD. It depends on [4Fe-4S] cluster as a cofactor.

The catalysed reaction is (2R,3S)-3-isopropylmalate = (2S)-2-isopropylmalate. Its pathway is amino-acid biosynthesis; L-leucine biosynthesis; L-leucine from 3-methyl-2-oxobutanoate: step 2/4. Catalyzes the isomerization between 2-isopropylmalate and 3-isopropylmalate, via the formation of 2-isopropylmaleate. This is 3-isopropylmalate dehydratase large subunit from Saccharopolyspora erythraea (strain ATCC 11635 / DSM 40517 / JCM 4748 / NBRC 13426 / NCIMB 8594 / NRRL 2338).